We begin with the raw amino-acid sequence, 1006 residues long: Transcription factor tau subunit sfc4 (1006 aa).

Residues 64 to 91 form a disordered region; the sequence is GLWSDEESDYEGSDDESNFSKTASRTED. Over residues 66 to 80 the composition is skewed to acidic residues; the sequence is WSDEESDYEGSDDES. 6 TPR repeats span residues 133 to 166, 205 to 238, 277 to 310, 396 to 429, 431 to 464, and 466 to 499; these read QQMLSLANHLFAQEGNFDEAQKLAEEIVRIDNNV, HELWFTCAKLSESLEFWDQADYCYNRAVSAKPPN, ASILKNLAEIYIKIHAPREILKQFEIAWKYFYQY, HLFRTKLGIARLKTGELPEAELHFSVIKNLPPDY, WGMLYDIAKAYMDIERLDLALEYFVLICNHEPAQ, and IGLWYNMGVCYLELKEYEHAQQCMEAILIVDNSN. The stretch at 506 to 554 forms a coiled coil; the sequence is LAEINELQDNRDAALEIVTNIFEQRRNINELEREQSQNEDHEKNVGSQL. TPR repeat units follow at residues 841-874 and 924-957; these read PVLVLLYGHIMARNRSWIPAINYYSRAFAINPDC and QEALYNLGKAYHFIGLEHYAVKYYEAVLGLSPMS.

Component of the TFIIIC complex including sfc1, sfc3, sfc4, sfc6 and sfc7. The subunits are organized in two globular domains, tauA and tauB, connected by a proteolysis-sensitive and flexible linker. Interacts with sfc1, sfc3 and sfc6. Phosphorylated.

Its subcellular location is the nucleus. In terms of biological role, TFIIIC mediates tRNA and 5S RNA gene activation by binding to intragenic promoter elements. Upstream of the transcription start site, TFIIIC assembles the initiation complex TFIIIB-TFIIIC-tDNA, which is sufficient for RNA polymerase III recruitment and function. Part of the tauA domain of TFIIIC that binds boxA DNA promoter sites of tRNA and similar genes. Sfc4 is the TFIIIB assembling subunit of TFIIIC. The polypeptide is Transcription factor tau subunit sfc4 (Schizosaccharomyces pombe (strain 972 / ATCC 24843) (Fission yeast)).